The sequence spans 528 residues: Ecdysteroid UDP-glucosyltransferase (528 aa).

Positions Met1–Ala32 are cleaved as a signal peptide.

It belongs to the UDP-glycosyltransferase family.

Catalyzes the transfer of glucose from UDP-glucose to ecdysteroids which are insect molting hormones. Expression of egt interferes with normal insect development and block molting. In Mamestra brassicae nuclear polyhedrosis virus (MbNPV), this protein is Ecdysteroid UDP-glucosyltransferase (EGT).